Reading from the N-terminus, the 356-residue chain is Protein-glutamate methylesterase/protein-glutamine glutaminase (356 aa).

A Response regulatory domain is found at 4–121 (KVLIVDDSAL…QSGMLEYTDL (118 aa)). Asp55 bears the 4-aspartylphosphate mark. The CheB-type methylesterase domain occupies 156-349 (PLTSSEKLII…RRVLEFFAAH (194 aa)). Active-site residues include Ser169, His195, and Asp291.

This sequence belongs to the CheB family. In terms of processing, phosphorylated by CheA. Phosphorylation of the N-terminal regulatory domain activates the methylesterase activity.

The protein resides in the cytoplasm. It carries out the reaction [protein]-L-glutamate 5-O-methyl ester + H2O = L-glutamyl-[protein] + methanol + H(+). It catalyses the reaction L-glutaminyl-[protein] + H2O = L-glutamyl-[protein] + NH4(+). Its function is as follows. Involved in chemotaxis. Part of a chemotaxis signal transduction system that modulates chemotaxis in response to various stimuli. Catalyzes the demethylation of specific methylglutamate residues introduced into the chemoreceptors (methyl-accepting chemotaxis proteins or MCP) by CheR. Also mediates the irreversible deamidation of specific glutamine residues to glutamic acid. This chain is Protein-glutamate methylesterase/protein-glutamine glutaminase, found in Thiobacillus denitrificans (strain ATCC 25259 / T1).